The chain runs to 114 residues: UPF0757 protein YmgG (114 aa).

It belongs to the UPF0757 family.

In Escherichia fergusonii (strain ATCC 35469 / DSM 13698 / CCUG 18766 / IAM 14443 / JCM 21226 / LMG 7866 / NBRC 102419 / NCTC 12128 / CDC 0568-73), this protein is UPF0757 protein YmgG.